The primary structure comprises 211 residues: Adenylate kinase (211 aa).

10 to 15 (GAGKGT) lines the ATP pocket. Residues 30 to 59 (STGGILRAAIQKQTALGKKVQKVVEVGGLV) are NMP. AMP is bound by residues threonine 31, arginine 36, 57–59 (GLV), 85–88 (GFPR), and glutamine 92. The segment at 121 to 158 (GRRVCSACGSSYHVLFAQPKREGVCDRCRGVLVVREDD) is LID. Arginine 122 contributes to the ATP binding site. Zn(2+)-binding residues include cysteine 125 and cysteine 128. 131–132 (SY) is a binding site for ATP. Residues cysteine 145 and cysteine 148 each contribute to the Zn(2+) site. The AMP site is built by arginine 155 and arginine 166. Proline 194 is a binding site for ATP.

This sequence belongs to the adenylate kinase family. Monomer.

Its subcellular location is the cytoplasm. It catalyses the reaction AMP + ATP = 2 ADP. It functions in the pathway purine metabolism; AMP biosynthesis via salvage pathway; AMP from ADP: step 1/1. Catalyzes the reversible transfer of the terminal phosphate group between ATP and AMP. Plays an important role in cellular energy homeostasis and in adenine nucleotide metabolism. The polypeptide is Adenylate kinase (Treponema pallidum (strain Nichols)).